The following is a 1231-amino-acid chain: Fanconi anemia group J protein homolog (1231 aa).

One can recognise a Helicase ATP-binding domain in the interval 11 to 448 (GGVKILFPCR…SDHEPLRAVC (438 aa)). 46-53 (SPTGSGKS) contributes to the ATP binding site. Disordered regions lie at residues 104-126 (TFSS…GASS) and 147-166 (QDDD…DEQL). Over residues 152 to 166 (QTDRKRIRQSHDEQL) the composition is skewed to basic and acidic residues. The Nuclear localization signal signature appears at 155 to 173 (RKRIRQSHDEQLQARKRRC). Positions 291, 304, 316, and 356 each coordinate [4Fe-4S] cluster. The DEAH box motif lies at 399 to 402 (DEAH). The segment covering 890–903 (SKNQQQRMQMSSTN) has biased composition (polar residues). Disordered regions lie at residues 890–924 (SKNQ…PTSS), 936–956 (VSEF…PPEI), and 1195–1231 (GNEN…FFLD). Low complexity-rich tracts occupy residues 909–924 (SQGT…PTSS) and 940–954 (TQPT…TSPP). Over residues 1206 to 1217 (KGTEQKNRENRL) the composition is skewed to basic and acidic residues.

Belongs to the DEAD box helicase family. DEAH subfamily. [4Fe-4S] cluster is required as a cofactor.

It is found in the nucleus. It carries out the reaction Couples ATP hydrolysis with the unwinding of duplex DNA at the replication fork by translocating in the 5'-3' direction. This creates two antiparallel DNA single strands (ssDNA). The leading ssDNA polymer is the template for DNA polymerase III holoenzyme which synthesizes a continuous strand.. It catalyses the reaction ATP + H2O = ADP + phosphate + H(+). In terms of biological role, DNA-dependent helicase and 5' to 3' DNA helicase required for the maintenance of chromosomal stability. Involved in the repair of DNA double-strand breaks by homologous recombination. Involved in the repair of abasic sites at replication forks by promoting the degradation of DNA-protein cross-links: acts by catalyzing unfolding of HMCES DNA-protein cross-link via its helicase activity, exposing the underlying DNA and enabling cleavage of the DNA-protein adduct by the SPRTN metalloprotease. The polypeptide is Fanconi anemia group J protein homolog (brip1.L) (Xenopus laevis (African clawed frog)).